The sequence spans 477 residues: Bifunctional protein HldE (477 aa).

Residues 1–318 (MKVTLPDFRR…ENAIRGRADT (318 aa)) form a ribokinase region. 195–198 (NLSE) is a binding site for ATP. Asp264 is an active-site residue. The tract at residues 344-477 (MTNGVFDILH…INIIRQGQND (134 aa)) is cytidylyltransferase.

The protein in the N-terminal section; belongs to the carbohydrate kinase PfkB family. It in the C-terminal section; belongs to the cytidylyltransferase family. In terms of assembly, homodimer.

It catalyses the reaction D-glycero-beta-D-manno-heptose 7-phosphate + ATP = D-glycero-beta-D-manno-heptose 1,7-bisphosphate + ADP + H(+). The catalysed reaction is D-glycero-beta-D-manno-heptose 1-phosphate + ATP + H(+) = ADP-D-glycero-beta-D-manno-heptose + diphosphate. Its pathway is nucleotide-sugar biosynthesis; ADP-L-glycero-beta-D-manno-heptose biosynthesis; ADP-L-glycero-beta-D-manno-heptose from D-glycero-beta-D-manno-heptose 7-phosphate: step 1/4. It functions in the pathway nucleotide-sugar biosynthesis; ADP-L-glycero-beta-D-manno-heptose biosynthesis; ADP-L-glycero-beta-D-manno-heptose from D-glycero-beta-D-manno-heptose 7-phosphate: step 3/4. Functionally, catalyzes the phosphorylation of D-glycero-D-manno-heptose 7-phosphate at the C-1 position to selectively form D-glycero-beta-D-manno-heptose-1,7-bisphosphate. Catalyzes the ADP transfer from ATP to D-glycero-beta-D-manno-heptose 1-phosphate, yielding ADP-D-glycero-beta-D-manno-heptose. The chain is Bifunctional protein HldE from Edwardsiella ictaluri (strain 93-146).